We begin with the raw amino-acid sequence, 468 residues long: MEGMLSSGDQQRLVSSFLEIAVGQTAETARQFLQATSWKLEEAIQLFYIGNEGGMLQSGTHTQPASNDDAAAQSWGAATGTGNEMILPNDVDEVRAPLPVVRETLYGESMYYGAMRVGNSQPEPNSLIAFRNFSEEPKSPGIWEPDEGDSSASASASASASESASAPRDSLASLYRPPFHLMFQGSFEQAKTTSSSQDKWLLVNLQSTTEFSSHMLNRDTWANDAVSQTIKANFIFWQVYDDTTEGRKVCTYYKLESIPVVLVIDPTTGQRMRMWTGMVDPENLLEDLVPFMDGGPREHFASLSKKRPRGSFSLTPHSKPKEDVAKDEEEEELQRALAASLEDNNMKESSDDQSTIIPEEVAVEAVTSAVLPTFPPLPEEPKGGDRSLQCRVGIRLPNGQRLQRNFLKTDTIQLLWSFCYSQLEESERKKPLKLTQAIPGESKTLEYESNLTLEQSGVANSMISATWE.

Met-1 is subject to N-acetylmethionine. Positions 7 to 48 (SGDQQRLVSSFLEIAVGQTAETARQFLQATSWKLEEAIQLFY) constitute a UBA-like domain. Disordered regions lie at residues 138–168 (KSPGIWEPDEGDSSASASASASASESASAPR) and 299–329 (HFASLSKKRPRGSFSLTPHSKPKEDVAKDEE). Residues 150–166 (SSASASASASASESASA) are compositionally biased toward low complexity. The 20-residue stretch at 328–347 (EEEEELQRALAASLEDNNMK) folds into the UIM domain. Residues 385–466 (DRSLQCRVGI…GVANSMISAT (82 aa)) form the UBX domain.

Interacts with CDC48A via its UBX domain and with ubiquitin via its N-terminal UBA-like domain. In terms of tissue distribution, expressed broadly in sporophyte and gametophyte cells.

The protein resides in the nucleus. In terms of biological role, acts as a bridge between CDC48A and ubiquitin, suggesting a role in targeted protein degradation. This Arabidopsis thaliana (Mouse-ear cress) protein is Plant UBX domain-containing protein 7.